Reading from the N-terminus, the 25-residue chain is Pancreatic triacylglycerol lipase (25 aa).

A disulfide bridge links Cys-4 with Cys-10.

Belongs to the AB hydrolase superfamily. Lipase family. Forms a 1:1 stoichiometric complex with (pro)colipase/CLPS.

It localises to the secreted. The enzyme catalyses a triacylglycerol + H2O = a diacylglycerol + a fatty acid + H(+). It catalyses the reaction 1,2,3-tributanoylglycerol + H2O = dibutanoylglycerol + butanoate + H(+). It carries out the reaction 1,2,3-tri-(9Z-octadecenoyl)-glycerol + H2O = di-(9Z)-octadecenoylglycerol + (9Z)-octadecenoate + H(+). The catalysed reaction is all-trans-retinyl hexadecanoate + H2O = all-trans-retinol + hexadecanoate + H(+). The enzyme catalyses 1,2-di-(9Z-octadecenoyl)-glycerol + H2O = (9Z-octadecenoyl)-glycerol + (9Z)-octadecenoate + H(+). Its activity is regulated as follows. Inhibited by bile salts, is reactivated by (pro)colipase/CLPS. Functionally, plays an important role in fat metabolism. It preferentially splits the esters of long-chain fatty acids at positions 1 and 3, producing mainly 2-monoacylglycerol and free fatty acids, and shows considerably higher activity against insoluble emulsified substrates than against soluble ones. The sequence is that of Pancreatic triacylglycerol lipase (PNLIP) from Felis catus (Cat).